Reading from the N-terminus, the 412-residue chain is Adipocyte plasma membrane-associated protein (412 aa).

The tract at residues 1-32 (MTEADGLRQRRPLRPQVVTDDNRTPEAKGGSS) is disordered. Topologically, residues 1 to 39 (MTEADGLRQRRPLRPQVVTDDNRTPEAKGGSSFSGRVFR) are cytoplasmic. Position 19 is a phosphothreonine (Thr19). Residues 40–60 (ATFLMLAAFLTIPLLGALVLL) form a helical membrane-spanning segment. Over 61-412 (DSPIDPEPLS…RAPYLCRLRL (352 aa)) the chain is Extracellular. N-linked (GlcNAc...) asparagine glycosylation is present at Asn159.

Belongs to the strictosidine synthase family.

It localises to the membrane. Functionally, exhibits strong arylesterase activity with beta-naphthyl acetate and phenyl acetate. May play a role in adipocyte differentiation. The protein is Adipocyte plasma membrane-associated protein (APMAP) of Bos taurus (Bovine).